We begin with the raw amino-acid sequence, 224 residues long: 7-cyano-7-deazaguanine synthase (224 aa).

ATP is bound at residue 9 to 19 (LSGGLDSATAL). 4 residues coordinate Zn(2+): Cys188, Cys198, Cys201, and Cys204.

This sequence belongs to the QueC family. Zn(2+) is required as a cofactor.

It catalyses the reaction 7-carboxy-7-deazaguanine + NH4(+) + ATP = 7-cyano-7-deazaguanine + ADP + phosphate + H2O + H(+). It participates in purine metabolism; 7-cyano-7-deazaguanine biosynthesis. In terms of biological role, catalyzes the ATP-dependent conversion of 7-carboxy-7-deazaguanine (CDG) to 7-cyano-7-deazaguanine (preQ(0)). In Thiobacillus denitrificans (strain ATCC 25259 / T1), this protein is 7-cyano-7-deazaguanine synthase.